A 149-amino-acid chain; its full sequence is Large ribosomal subunit protein bL9 (149 aa).

The protein belongs to the bacterial ribosomal protein bL9 family.

In terms of biological role, binds to the 23S rRNA. This Vibrio vulnificus (strain CMCP6) protein is Large ribosomal subunit protein bL9.